A 586-amino-acid chain; its full sequence is Putative Lon protease homolog (586 aa).

In terms of domain architecture, Lon proteolytic spans 346 to 543; it reads GERIGQINAL…TDALPLLLNL (198 aa). Active-site residues include S438 and K481.

The protein belongs to the peptidase S16 family.

This chain is Putative Lon protease homolog (ycbZ), found in Escherichia coli (strain K12).